Here is a 57-residue protein sequence, read N- to C-terminus: Large ribosomal subunit protein bL32 (57 aa).

Belongs to the bacterial ribosomal protein bL32 family.

This Bacillus licheniformis (strain ATCC 14580 / DSM 13 / JCM 2505 / CCUG 7422 / NBRC 12200 / NCIMB 9375 / NCTC 10341 / NRRL NRS-1264 / Gibson 46) protein is Large ribosomal subunit protein bL32.